The primary structure comprises 218 residues: Peptide methionine sulfoxide reductase MsrA (218 aa).

Cysteine 57 is a catalytic residue.

It belongs to the MsrA Met sulfoxide reductase family.

The enzyme catalyses L-methionyl-[protein] + [thioredoxin]-disulfide + H2O = L-methionyl-(S)-S-oxide-[protein] + [thioredoxin]-dithiol. It catalyses the reaction [thioredoxin]-disulfide + L-methionine + H2O = L-methionine (S)-S-oxide + [thioredoxin]-dithiol. Functionally, has an important function as a repair enzyme for proteins that have been inactivated by oxidation. Catalyzes the reversible oxidation-reduction of methionine sulfoxide in proteins to methionine. The polypeptide is Peptide methionine sulfoxide reductase MsrA (Brucella melitensis biotype 2 (strain ATCC 23457)).